The following is a 348-amino-acid chain: Protein pelota homolog (348 aa).

The protein belongs to the eukaryotic release factor 1 family. Pelota subfamily. In terms of assembly, monomer. The cofactor is a divalent metal cation.

It is found in the cytoplasm. Functionally, may function in recognizing stalled ribosomes, interact with stem-loop structures in stalled mRNA molecules, and effect endonucleolytic cleavage of the mRNA. May play a role in the release non-functional ribosomes and degradation of damaged mRNAs. Has endoribonuclease activity. The protein is Protein pelota homolog of Methanococcus maripaludis (strain C7 / ATCC BAA-1331).